The chain runs to 459 residues: MSKVWSNRFDGSLNPFIEEFNASISFDKTLILEDIECSIAHAKMLSKTKVLSTDESLKIIEGLETIKEKFIEGKFCPGAPSEDIHYCIEEKLINLIGETGKKLHTGRSRNDQVGTDIRLWLRKKIDNIDILLYELQNSLFSIAESNIYTLIPGYTHMQRAQPLSLAHHLLAYLEMFQRDRERLKEVRARVNISPLGAAALAGTKIKIDRYFTAEELGFGNIYKNSIDAVSDRDFCIEFASSSALIMSHLSRISEEIILWVTDEFSFAKLTDKCATGSSLMPQKKNPDVPELIRGKTGRVYGHLQSLLTMIKGVPLSYNKDFQEDKEPIFDTVDTISSCLKAMTILLNEGIEFNVEKLMDSVHNDFSNATDLADYLVFKKVPFREAYQVVGDIVKYCLSKNILFKDLQLEEFQTFHNEFKEDIYENLNPMNVVKSRNSLGGTGFDQVKLELNNWKKKLFT.

The protein belongs to the lyase 1 family. Argininosuccinate lyase subfamily.

The protein resides in the cytoplasm. The catalysed reaction is 2-(N(omega)-L-arginino)succinate = fumarate + L-arginine. It functions in the pathway amino-acid biosynthesis; L-arginine biosynthesis; L-arginine from L-ornithine and carbamoyl phosphate: step 3/3. The polypeptide is Argininosuccinate lyase (Prochlorococcus marinus subsp. pastoris (strain CCMP1986 / NIES-2087 / MED4)).